The chain runs to 145 residues: ATP synthase epsilon chain (145 aa).

Residues 100-123 (RAQRAKQRAEDAIKTASEKHDSDE) form a disordered region. Residues 106 to 123 (QRAEDAIKTASEKHDSDE) are compositionally biased toward basic and acidic residues.

It belongs to the ATPase epsilon chain family. As to quaternary structure, F-type ATPases have 2 components, CF(1) - the catalytic core - and CF(0) - the membrane proton channel. CF(1) has five subunits: alpha(3), beta(3), gamma(1), delta(1), epsilon(1). CF(0) has three main subunits: a, b and c.

The protein resides in the cell membrane. Functionally, produces ATP from ADP in the presence of a proton gradient across the membrane. The chain is ATP synthase epsilon chain from Latilactobacillus sakei subsp. sakei (strain 23K) (Lactobacillus sakei subsp. sakei).